A 26-amino-acid chain; its full sequence is Unknown protein 16 (26 aa).

The interval 1-26 (AINSESGVRSVVPQPCNALPNQGPEK) is disordered.

The protein is Unknown protein 16 of Pseudotsuga menziesii (Douglas-fir).